Reading from the N-terminus, the 294-residue chain is ATP synthase gamma chain (294 aa).

Belongs to the ATPase gamma chain family. F-type ATPases have 2 components, CF(1) - the catalytic core - and CF(0) - the membrane proton channel. CF(1) has five subunits: alpha(3), beta(3), gamma(1), delta(1), epsilon(1). CF(0) has three main subunits: a, b and c.

The protein localises to the cell inner membrane. Produces ATP from ADP in the presence of a proton gradient across the membrane. The gamma chain is believed to be important in regulating ATPase activity and the flow of protons through the CF(0) complex. The sequence is that of ATP synthase gamma chain from Paramagnetospirillum magneticum (strain ATCC 700264 / AMB-1) (Magnetospirillum magneticum).